The sequence spans 154 residues: Jupiter microtubule associated homolog 1 (154 aa).

Residue Met1 is modified to N-acetylmethionine. A compositionally biased stretch (polar residues) spans 1-19 (MTTTTTFKGVDPNSRNSSR). The segment at 1–154 (MTTTTTFKGV…PGGKSSLVLG (154 aa)) is disordered. Thr2 is modified (N-acetylthreonine; in Hematological and neurological expressed 1 protein, N-terminally processed). Phosphoserine is present on residues Ser28 and Ser31. Residue Thr54 is modified to Phosphothreonine. 5 positions are modified to phosphoserine: Ser71, Ser80, Ser87, Ser88, and Ser92. A compositionally biased stretch (polar residues) spans 80 to 91 (SGPQRRNSSEAN). A compositionally biased stretch (basic and acidic residues) spans 96-108 (LDLKGEGDVHENV). Positions 125-138 (PAAPVPSPVAPAPV) are enriched in pro residues. Ser131 is modified (phosphoserine). N6-acetyllysine is present on Lys148.

Belongs to the JUPITER family. As to quaternary structure, interacts with the complex composed, at least, of APC, CTNNB1 and GSK3B; the interaction takes place with the inactive form of GSK3B (phosphorylated at 'Ser-9').

Its subcellular location is the nucleus. The protein localises to the cytoplasm. In terms of biological role, modulates negatively AKT-mediated GSK3B signaling. Induces CTNNB1 'Ser-33' phosphorylation and degradation through the suppression of the inhibitory 'Ser-9' phosphorylation of GSK3B, which represses the function of the APC:CTNNB1:GSK3B complex and the interaction with CDH1/E-cadherin in adherent junctions. Plays a role in the regulation of cell cycle and cell adhesion. Has an inhibitory role on AR-signaling pathway through the induction of receptor proteasomal degradation. In Bos taurus (Bovine), this protein is Jupiter microtubule associated homolog 1.